Here is a 498-residue protein sequence, read N- to C-terminus: UDP-N-acetylmuramate--L-alanine ligase (498 aa).

120–126 (GSHGKTT) contacts ATP.

Belongs to the MurCDEF family.

The protein resides in the cytoplasm. It carries out the reaction UDP-N-acetyl-alpha-D-muramate + L-alanine + ATP = UDP-N-acetyl-alpha-D-muramoyl-L-alanine + ADP + phosphate + H(+). It functions in the pathway cell wall biogenesis; peptidoglycan biosynthesis. In terms of biological role, cell wall formation. This chain is UDP-N-acetylmuramate--L-alanine ligase, found in Rickettsia typhi (strain ATCC VR-144 / Wilmington).